Here is a 379-residue protein sequence, read N- to C-terminus: Cytochrome b (379 aa).

4 consecutive transmembrane segments (helical) span residues 33–53 (FGSL…FLAM), 77–98 (WLIR…YLHI), 113–133 (WNIG…GYVL), and 178–198 (FFAF…LHLL). Heme b is bound by residues H83 and H97. Heme b contacts are provided by H182 and H196. H201 is an a ubiquinone binding site. 4 helical membrane passes run 226–246 (YKDL…ALFY), 288–308 (LGGV…PILH), 320–340 (ISQL…WIGG), and 347–367 (YIII…VLNP).

The protein belongs to the cytochrome b family. In terms of assembly, the cytochrome bc1 complex contains 3 respiratory subunits (MT-CYB, CYC1 and UQCRFS1), 2 core proteins (UQCRC1 and UQCRC2) and probably 6 low-molecular weight proteins. It depends on heme b as a cofactor.

The protein localises to the mitochondrion inner membrane. Component of the ubiquinol-cytochrome c reductase complex (complex III or cytochrome b-c1 complex) that is part of the mitochondrial respiratory chain. The b-c1 complex mediates electron transfer from ubiquinol to cytochrome c. Contributes to the generation of a proton gradient across the mitochondrial membrane that is then used for ATP synthesis. The sequence is that of Cytochrome b (mt-cyb) from Anguilla mossambica (African longfin eel).